A 577-amino-acid polypeptide reads, in one-letter code: Protein NUCLEOLAR COMPLEX ASSOCIATED 4 (577 aa).

The tract at residues 230-263 (PEKQAEKSQHEMWSGSDESISEKPTDKKKKTEKG) is disordered. A run of 3 helical transmembrane segments spans residues 329 to 349 (IGGV…TQHG), 350 to 370 (LEYP…VFVA), and 404 to 424 (LSLS…YNLL).

Belongs to the CBF/MAK21 family. Component of the ribosomal small subunit (SSU) processome composed of at least 40 protein subunits and snoRNA U3. In terms of tissue distribution, mostly expressed in flowers and stems and at lower levels in roots, hypocotyls, siliques, leaves and seeds.

The protein resides in the nucleus membrane. It is found in the nucleus. Its subcellular location is the nucleolus. Essential protein required during embryogenesis. Involved in nucleolar processing of ribosomal RNA (rRNA) 40S and 90S ribosomal subunits and ribosome assembly; early in ribosome biogenesis, especially required during the maturation of 5.8S rRNA. Has a role in the nuclear export of 40S pre-ribosomal subunit to the cytoplasm. The protein is Protein NUCLEOLAR COMPLEX ASSOCIATED 4 of Arabidopsis thaliana (Mouse-ear cress).